Consider the following 895-residue polypeptide: MLGIGTLAKKVFGTPNDRKIKATRPLIAKINALEPEFEALSDQGIKDKTEDLRKRALAGESLDDLLPEAFANVREAARRALGLRAFDTQLMGGTFLHQGNISEMKTGEGKTLVATFPAYLNALTGKGVHVVTVNEYLAKRDSEWMSKVFGALGMTTGVIYSNQPEAEKMAAYQCDVTYATNNELGFDYLRDNMKPSLDQVFQKQHNFAIVDEVDSILIDEARTPLIISGPAEDRSELYETIDKLIPTLDEGHYEIDEKTRGVTFTDEGNEFLEESLLKAGLLEEGASLYDPESTTIVHHVNQALRAHKLFQRDKDYIVRDGNVVLIDEFTGRMMPGRRLSEGLHQAIEAKEGTDIQPENTTLASVTFQNYFRLYDKLSGMTGTAMTEAEEFAEIYGLGVVEVPTNRPIARIDEDDKVYRTANEKYAAMIAETKLAHEKGQPVLLGTTSIEKSELLSQLLQQEGIEHNVLNARHHEQEAKIVAEAGRLGAVTIATNMAGRGTDIQLGGNIDLKVMEALEANPDADPAVLRAEEEAKHAEEKQKVLEAGGLYVMASERHESRRIDNQLRGRSGRQGDPGRTSFYLSLEDDLMRIFGSERLDKLLSGLGMKEGEAIIHPWVNKSLERAQAKVEGRNFDMRKNVLKFDDVMNDQRKVVFAQRREIMASDDTHEIVTDMRHEVIDDLIDIYMPPKTYADQWDTQGLQDDVREKLNIDAPVVEWAAEEGVDDEQIRERLVEASDKLMAEKVEAFGQEGMSNIEKQVLLQTIDAKWREHLLTLEHLRSVVGFRGYAQRDPLNEYKNESFQLFESMLDSLRETVTQQLSRVRPLSEEEQREMMMQMAARQGMQRAAAPAAEPVEAPKEGFVEDDPSTWGNPSRNDKCPCGSGKKFKHCHGRLG.

ATP contacts are provided by residues Gln-89, 107 to 111, and Asp-502; that span reads GEGKT. Disordered regions lie at residues 560–579 and 848–884; these read RRID…PGRT and AAPA…CGSG. Residues Cys-879, Cys-881, Cys-890, and His-891 each contribute to the Zn(2+) site.

The protein belongs to the SecA family. As to quaternary structure, monomer and homodimer. Part of the essential Sec protein translocation apparatus which comprises SecA, SecYEG and auxiliary proteins SecDF-YajC and YidC. The cofactor is Zn(2+).

The protein resides in the cell inner membrane. The protein localises to the cytoplasm. The enzyme catalyses ATP + H2O + cellular proteinSide 1 = ADP + phosphate + cellular proteinSide 2.. Functionally, part of the Sec protein translocase complex. Interacts with the SecYEG preprotein conducting channel. Has a central role in coupling the hydrolysis of ATP to the transfer of proteins into and across the cell membrane, serving both as a receptor for the preprotein-SecB complex and as an ATP-driven molecular motor driving the stepwise translocation of polypeptide chains across the membrane. The sequence is that of Protein translocase subunit SecA from Ruegeria sp. (strain TM1040) (Silicibacter sp.).